The following is a 434-amino-acid chain: MTFLLFQLLVLLRYSIGFHCKIDNNGVKSVTSKKNDDEKIVISRNWKAAISLDFIFIVFPMLLFFTVLSEWVYHGTGLLSLLVLILSVTAKRSFSGLQRGQSLSFRASVSSYRVALMLITCLCILAVDFTIFPRRYAKTETYGTSLMDLGVGSFVLANAVVSRQARDVSSGNWITGIKATAPLLLLGFIRLVTTSGVDYQVHVTEYGVHWNFFFTLAAISILTSFVNIPAKYCGLLGFAVLAGYQTWLLSGLNTYLLSDERGTDIISKNKEGVYSILGYWGMYLLGVHLGYRLFYGKHTNIRSTTSSIARVFLVSLLLWIVTILFDNYVERISRRTCNMPYVTWVLAQDLQALGIFMLSSYIPLNKLSSLEEAIDQNLLATFLLANLVTGMVNLTVDTIFASPFSSLLILTAYAFALSAIIGTIHFSGFRLKFW.

Residues 1–17 (MTFLLFQLLVLLRYSIG) form the signal peptide. 12 helical membrane passes run 48–68 (AAIS…FTVL), 70–90 (EWVY…SVTA), 112–132 (YRVA…FTIF), 141–161 (TYGT…NAVV), 173–193 (WITG…RLVT), 206–226 (YGVH…TSFV), 232–252 (YCGL…LSGL), 271–291 (EGVY…HLGY), 305–325 (TSSI…TILF), 344–364 (WVLA…YIPL), 380–400 (ATFL…DTIF), and 404–424 (FSSL…IGTI).

It is found in the membrane. This is an uncharacterized protein from Arabidopsis thaliana (Mouse-ear cress).